Reading from the N-terminus, the 240-residue chain is MLRLLFKRFLNVVKWFAIASVLLVLLFRVVPPPFTALMVERKVESWFDGEPIDLQRSWVPWDEISDDLKVAVMAGEDQRFPQHWGFDFGAIQAAIQHNERGGSIRGASTLSQQVSKNLFLWAGRSYLRKGLEAWFTGLIEVLWPKQRILEVYLNSVEWDEGVFGAEAAARHHFGVSAKGLSRQQASYLAAVLPNPRVWSASHPTAYVARRAAWIRQQMSQLGGDGYLVELNNARKAPWSD.

The helical transmembrane segment at 9-31 (FLNVVKWFAIASVLLVLLFRVVP) threads the bilayer.

This sequence belongs to the glycosyltransferase 51 family.

It localises to the cell inner membrane. The enzyme catalyses [GlcNAc-(1-&gt;4)-Mur2Ac(oyl-L-Ala-gamma-D-Glu-L-Lys-D-Ala-D-Ala)](n)-di-trans,octa-cis-undecaprenyl diphosphate + beta-D-GlcNAc-(1-&gt;4)-Mur2Ac(oyl-L-Ala-gamma-D-Glu-L-Lys-D-Ala-D-Ala)-di-trans,octa-cis-undecaprenyl diphosphate = [GlcNAc-(1-&gt;4)-Mur2Ac(oyl-L-Ala-gamma-D-Glu-L-Lys-D-Ala-D-Ala)](n+1)-di-trans,octa-cis-undecaprenyl diphosphate + di-trans,octa-cis-undecaprenyl diphosphate + H(+). Its pathway is cell wall biogenesis; peptidoglycan biosynthesis. Its function is as follows. Peptidoglycan polymerase that catalyzes glycan chain elongation from lipid-linked precursors. The polypeptide is Biosynthetic peptidoglycan transglycosylase (Pseudomonas fluorescens (strain SBW25)).